We begin with the raw amino-acid sequence, 725 residues long: Sesterterpene synthase btcA (725 aa).

Residues 1 to 333 (MANPPVTEWK…CANCPRHHAW (333 aa)) are terpene cyclase. A Mg(2+)-binding site is contributed by Asp-100. Residues Asp-100, Asn-236, 240–244 (SWGRE), and 329–330 (RH) each bind substrate. Positions 100–104 (DDATE) match the DDXXD 1 motif. An NSE/DTE motif is present at residues 236-244 (NDYWSWGRE). The interval 334 to 722 (KEQDQAVHAV…MLYVLLQTLS (389 aa)) is prenyltransferase. The tract at residues 352–426 (VEAQSPSSAT…PSSLHLLKSP (75 aa)) is disordered. The segment covering 355 to 364 (QSPSSATHTA) has biased composition (polar residues). Positions 375–419 (APSPISSPSSSSSAKPSSSSAADSSSCTSTSQHSPSETDSTPPSS) are enriched in low complexity. Isopentenyl diphosphate contacts are provided by Lys-442, Arg-445, and His-474. Mg(2+) is bound by residues Asp-481 and Asp-485. Residues 481–485 (DDIQD) carry the DDXXD 2 motif. A dimethylallyl diphosphate-binding site is contributed by Arg-490. Residue Arg-491 coordinates isopentenyl diphosphate. The dimethylallyl diphosphate site is built by Lys-568, Thr-569, Gln-604, Asn-611, Lys-621, and Lys-631.

The protein in the N-terminal section; belongs to the terpene synthase family. In the C-terminal section; belongs to the FPP/GGPP synthase family. As to quaternary structure, hexamer. Requires Mg(2+) as cofactor.

It catalyses the reaction isopentenyl diphosphate + (2E,6E)-farnesyl diphosphate = (2E,6E,10E)-geranylgeranyl diphosphate + diphosphate. It carries out the reaction isopentenyl diphosphate + (2E,6E,10E)-geranylgeranyl diphosphate = (2E,6E,10E,14E)-geranylfarnesyl diphosphate + diphosphate. It participates in secondary metabolite biosynthesis; terpenoid biosynthesis. Its function is as follows. Bifunctional terpene synthase; part of the gene cluster that mediates the biosynthesis of betaestacins. The bifunctional terpene synthase btcA converts isopentenyl diphosphate (IPP) and dimethylallyl diphosphate (DMAPP) into the sesterterpene betaestacin I. The C-terminal prenyltransferase (PT) domain of btcA catalyzes formation of GFPP, whereas the N-terminal terpene cyclase (TC) domain catalyzes the cyclization of GFPP into betaestacin I. The cytochrome P450 monooxygenase btcB is then responsible for the six-step oxidation of betaestacin I to yield betaestacin II. The roles of the cytochrome P450 monooxygenase btcC and the alpha-ketoglutarate-dependent dioxygenase btcD have not been identified yet. This is Sesterterpene synthase btcA from Neocamarosporium betae (Beet black rot fungus).